Consider the following 491-residue polypeptide: Glutamyl-tRNA(Gln) amidotransferase subunit A (491 aa).

Catalysis depends on charge relay system residues lysine 77 and serine 152. Serine 176 serves as the catalytic Acyl-ester intermediate.

This sequence belongs to the amidase family. GatA subfamily. Heterotrimer of A, B and C subunits.

It catalyses the reaction L-glutamyl-tRNA(Gln) + L-glutamine + ATP + H2O = L-glutaminyl-tRNA(Gln) + L-glutamate + ADP + phosphate + H(+). Functionally, allows the formation of correctly charged Gln-tRNA(Gln) through the transamidation of misacylated Glu-tRNA(Gln) in organisms which lack glutaminyl-tRNA synthetase. The reaction takes place in the presence of glutamine and ATP through an activated gamma-phospho-Glu-tRNA(Gln). This is Glutamyl-tRNA(Gln) amidotransferase subunit A (gatA) from Chlamydia muridarum (strain MoPn / Nigg).